A 471-amino-acid polypeptide reads, in one-letter code: Putative multidrug resistance protein MdtD (471 aa).

The Periplasmic portion of the chain corresponds to 1-11 (MTDLPDSTRWQ). The chain crosses the membrane as a helical span at residues 12–32 (LWIVAFGFFMQSLDTTIVNTA). Topologically, residues 33–48 (LPSMAQSLGESPLHMH) are cytoplasmic. A helical membrane pass occupies residues 49-69 (MVIVSYVLTVAVMLPASGWLA). The Periplasmic portion of the chain corresponds to 70–76 (DKVGVRN). The helical transmembrane segment at 77–97 (IFFTAIVLFTLGSLFCALSAT) threads the bilayer. At 98–101 (LNEL) the chain is on the cytoplasmic side. Residues 102–124 (LLARALQGVGGAMMVPVGRLTVM) traverse the membrane as a helical segment. Residues 125-137 (KIVPREQYMAAMT) lie on the Periplasmic side of the membrane. Residues 138–158 (FVTLPGQVGPLLGPALGGLLV) traverse the membrane as a helical segment. Residues 159-164 (EYASWH) lie on the Cytoplasmic side of the membrane. A helical transmembrane segment spans residues 165–185 (WIFLINIPVGIIGAIATLMLM). At 186–196 (PNYTMQTRRFD) the chain is on the periplasmic side. Residues 197 to 217 (LSGFLLLAVGMAVLTLALDGS) form a helical membrane-spanning segment. Residues 218-224 (KGTGLSP) are Cytoplasmic-facing. Residues 225–245 (LAIAGLAAIGVVALVLYLLHA) form a helical membrane-spanning segment. The Periplasmic segment spans residues 246–262 (RNNNRALFSLKLFRTRT). The chain crosses the membrane as a helical span at residues 263–283 (FSLGLAGSFAGRIGSGMLPFM). At 284–285 (TP) the chain is on the cytoplasmic side. A helical membrane pass occupies residues 286 to 306 (VFLQIGLGFSPFHAGLMMIPM). At 307 to 341 (VLGSMGMKRIVVQVVNRFGYRRVLVATTLGLSLVT) the chain is on the periplasmic side. Residues 342 to 362 (LLFMTTALLGWYYVLPFVLFL) traverse the membrane as a helical segment. Topologically, residues 363 to 395 (QGMVNSTRFSSMNTLTLKDLPDNLASSGNSLLS) are cytoplasmic. A helical membrane pass occupies residues 396–416 (MIMQLSMSIGVTIAGLLLGLF). At 417–430 (GSQHVSVDSSTTQT) the chain is on the periplasmic side. A helical membrane pass occupies residues 431–451 (VFMYTWLSMALIIALPAFIFA). Residues 452 to 471 (RVPNDTHQNVAISRRKRSAQ) lie on the Cytoplasmic side of the membrane.

Belongs to the major facilitator superfamily. TCR/Tet family.

The protein localises to the cell inner membrane. The chain is Putative multidrug resistance protein MdtD from Escherichia fergusonii (strain ATCC 35469 / DSM 13698 / CCUG 18766 / IAM 14443 / JCM 21226 / LMG 7866 / NBRC 102419 / NCTC 12128 / CDC 0568-73).